The primary structure comprises 718 residues: Putative aminodeoxychorismate synthase (718 aa).

Residues 9-203 (QILLIDCYDS…LSLADTPNIQ (195 aa)) enclose the Glutamine amidotransferase type-1 domain. Residue cysteine 88 is the Nucleophile of the active site. Residues histidine 177 and glutamate 179 contribute to the active site. The tract at residues 266–718 (FLDSAKKPGR…NLKNKKRSCK (453 aa)) is PABB component.

In the C-terminal section; belongs to the anthranilate synthase component I family.

It is found in the cytoplasm. It localises to the nucleus. The enzyme catalyses chorismate + L-glutamine = 4-amino-4-deoxychorismate + L-glutamate. It functions in the pathway cofactor biosynthesis; tetrahydrofolate biosynthesis; 4-aminobenzoate from chorismate: step 1/2. Catalyzes the biosynthesis of 4-amino-4-deoxychorismate (ADC) from chorismate and glutamine. Required for the synthesis of 4-aminobenzoate (PABA), an important component in tetrahydrofolate biosynthesis. This is Putative aminodeoxychorismate synthase from Schizosaccharomyces pombe (strain 972 / ATCC 24843) (Fission yeast).